Reading from the N-terminus, the 352-residue chain is Transcription factor RSL2 (352 aa).

Residues 160-169 (SVTTTKSLTG) show a composition bias toward polar residues. The tract at residues 160–277 (SVTTTKSLTG…ASRGAATDPQ (118 aa)) is disordered. Residues 183 to 192 (KRARVNKRAQ) show a composition bias toward basic residues. The segment covering 223–232 (SRQNSSTTFC) has biased composition (polar residues). The segment at 272-285 (AATDPQSLYARKRR) is basic motif. Positions 272-321 (AATDPQSLYARKRRERINERLRILQNLVPNGTKVDISTMLEEAVHYVKFL) constitute a bHLH domain. A helix-loop-helix motif region spans residues 286–321 (ERINERLRILQNLVPNGTKVDISTMLEEAVHYVKFL).

In terms of assembly, homodimer. In terms of tissue distribution, expressed in roots. Expressed in root epidermal hair cells.

Its subcellular location is the nucleus. Transcription factor involved in the regulation of root hair elongation. Does not seem to be a direct transcriptional target of RHD6 and RSL1. Involved in the regulation of root hair elongation in response to low phosphate. In Arabidopsis thaliana (Mouse-ear cress), this protein is Transcription factor RSL2.